The chain runs to 96 residues: Large ribosomal subunit protein bL21 (96 aa).

This sequence belongs to the bacterial ribosomal protein bL21 family. Part of the 50S ribosomal subunit. Contacts protein L20.

Functionally, this protein binds to 23S rRNA in the presence of protein L20. In Chlorobium chlorochromatii (strain CaD3), this protein is Large ribosomal subunit protein bL21.